The chain runs to 447 residues: MAGAGGGNDIQWCFSQVKGAVDDDVAEADIISTVEFNHSGELLATGDKGGRVVIFQQEQENKIQSHSRGEYNVYSTFQSHEPEFDYLKSLEIEEKINKIRWLPQKNAAQFLLSTNDKTIKLWKISERDKRPEGYNLKEEDGRYRDPTTVTTLRVPVFRPMDLMVEASPRRIFANAHTYHINSISINSDYETYLSADDLRINLWHLEITDRSFNIVDIKPANMEELTEVITAAEFHPNSCNTFVYSSSKGTIRLCDMRASALCDRHSKLFEEPEDPSNRSFFSEIISSISDVKFSHSGRYMMTRDYLSVKVWDLNMENRPVETYQVHEYLRSKLCSLYENDCIFDKFECCWNGSDSVVMTGSYNNFFRMFDRNTKRDITLEASRENNKPRTVLKPRKVCASGKRKKDEISVDSLDFNKKILHTAWHPKENIIAVATTNNLYIFQDKVN.

Alanine 2 carries the post-translational modification N-acetylalanine. WD repeat units lie at residues 11-80 (QWCF…FQSH), 94-174 (EKIN…IFAN), 175-218 (AHTY…VDIK), 227-270 (EVIT…KLFE), 288-325 (ISDV…TYQV), 347-381 (ECCW…TLEA), and 414-446 (DFNK…QDKV).

The protein belongs to the phosphatase 2A regulatory subunit B family. In terms of assembly, PP2A consists of a common heterodimeric core enzyme, composed of a 36 kDa catalytic subunit (subunit C) and a 65 kDa constant regulatory subunit (PR65 or subunit A), that associates with a variety of regulatory subunits. Proteins that associate with the core dimer include three families of regulatory subunits B (the R2/B/PR55/B55, R3/B''/PR72/PR130/PR59 and R5/B'/B56 families), the 48 kDa variable regulatory subunit, viral proteins, and cell signaling molecules. Interacts with the PP2A C catalytic subunit PPP2CA. Interacts with the PP2A A subunit PPP2R1A. Found in a complex with at least ARL2, PPP2CB, PPP2R1A, PPP2R2A, PPP2R5E and TBCD. Interacts with MFHAS1; the interaction is direct. Interacts with PABIR1/FAM122A (via its N-terminus); the interaction is direct and inhibits PP2A activity. Interacts with ARPP19; the interaction is direct and inhibits PP2A activity. Interacts with CRTC3. As to expression, brain.

In terms of biological role, substrate-recognition subunit of protein phosphatase 2A (PP2A) that plays a key role in cell cycle by controlling mitosis entry and exit. Involved in chromosome clustering during late mitosis by mediating dephosphorylation of MKI67. Essential for serine/threonine-protein phosphatase 2A-mediated dephosphorylation of WEE1, preventing its ubiquitin-mediated proteolysis, increasing WEE1 protein levels, and promoting the G2/M checkpoint. In Rattus norvegicus (Rat), this protein is Serine/threonine-protein phosphatase 2A 55 kDa regulatory subunit B alpha isoform (Ppp2r2a).